Here is a 230-residue protein sequence, read N- to C-terminus: Early E1A protein (230 aa).

The segment at 40-48 (PSLHDLFDL) is interaction with RB1 in competition with E2F1. An LXCXE motif, interaction with host RB1 motif is present at residues 106 to 110 (LLCLE). A zinc finger lies at 145-163 (CLRCAYYQEQGENSICGLC). The tract at residues 189–230 (KPGSRKRSAVTSRGSVESSKRPCLPEPEQTEPLDLSLKPRPQ) is disordered. The PXDLS motif, CTBP-binding signature appears at 220–224 (PLDLS). A Nuclear localization signal motif is present at residues 226 to 230 (KPRPQ).

This sequence belongs to the adenoviridae E1A protein family. Interacts with host UBE2I; this interaction interferes with polySUMOylation. Interacts with host RB1; this interaction induces the aberrant dissociation of RB1-E2F1 complex thereby disrupting the activity of RB1 and activating E2F1-regulated genes. Interacts with host ATF7; the interaction enhances ATF7-mediated viral transactivation activity which requires the zinc binding domains of both proteins. Isoform early E1A 32 kDa protein and isoform early E1A 26 kDa protein interact (via N-terminus) with CUL1 and E3 ubiquitin ligase RBX1; these interactions inhibit RBX1-CUL1-dependent elongation reaction of ubiquitin chains and attenuate ubiquitination of SCF(FBXW7) target proteins. Interacts (via PXLXP motif) with host ZMYND11/BS69 (via MYND-type zinc finger); this interaction inhibits E1A mediated transactivation. Interacts with host EP300; this interaction stimulates the acetylation of RB1 by recruiting EP300 and RB1 into a multimeric-protein complex. Interacts with host CTBP1 and CTBP2; this interaction seems to potentiate viral replication. Interacts with host DCAF7. Interacts with host DYRK1A. Interacts with host KPNA4; this interaction allows E1A import into the host nucleus. Interacts with host EP400; this interaction stabilizes MYC. Interacts with host TBP protein; this interaction probably disrupts the TBP-TATA complex.

It localises to the host nucleus. Its function is as follows. Plays a role in viral genome replication by driving entry of quiescent cells into the cell cycle. Stimulation of progression from G1 to S phase allows the virus to efficiently use the cellular DNA replicating machinery to achieve viral genome replication. E1A protein has both transforming and trans-activating activities. Induces the disassembly of the E2F1 transcription factor from RB1 by direct competition for the same binding site on RB1, with subsequent transcriptional activation of E2F1-regulated S-phase genes and of the E2 region of the adenoviral genome. Release of E2F1 leads to the ARF-mediated inhibition of MDM2 and causes TP53/p53 to accumulate because it is not targeted for degradation by MDM2-mediated ubiquitination anymore. This increase in TP53, in turn, would arrest the cell proliferation and direct its death but this effect is counteracted by the viral protein E1B-55K. Inactivation of the ability of RB1 to arrest the cell cycle is critical for cellular transformation, uncontrolled cellular growth and proliferation induced by viral infection. Interaction with RBX1 and CUL1 inhibits ubiquitination of the proteins targeted by SCF(FBXW7) ubiquitin ligase complex, and may be linked to unregulated host cell proliferation. The tumorigenesis-restraining activity of E1A may be related to the disruption of the host CtBP-CtIP complex through the CtBP binding motif. This Canine adenovirus serotype 1 (strain CLL) (CAdV-1) protein is Early E1A protein.